A 366-amino-acid polypeptide reads, in one-letter code: Chorismate synthase (366 aa).

R48 and R54 together coordinate NADP(+). Residues 125-127, 238-239, G278, 293-297, and R319 each bind FMN; these read RSS, NA, and KPTSS.

Belongs to the chorismate synthase family. As to quaternary structure, homotetramer. It depends on FMNH2 as a cofactor.

The enzyme catalyses 5-O-(1-carboxyvinyl)-3-phosphoshikimate = chorismate + phosphate. It functions in the pathway metabolic intermediate biosynthesis; chorismate biosynthesis; chorismate from D-erythrose 4-phosphate and phosphoenolpyruvate: step 7/7. Catalyzes the anti-1,4-elimination of the C-3 phosphate and the C-6 proR hydrogen from 5-enolpyruvylshikimate-3-phosphate (EPSP) to yield chorismate, which is the branch point compound that serves as the starting substrate for the three terminal pathways of aromatic amino acid biosynthesis. This reaction introduces a second double bond into the aromatic ring system. This chain is Chorismate synthase, found in Paraburkholderia phytofirmans (strain DSM 17436 / LMG 22146 / PsJN) (Burkholderia phytofirmans).